A 333-amino-acid chain; its full sequence is Protoheme IX farnesyltransferase (333 aa).

Helical transmembrane passes span 31 to 51 (VMSLVVFTGLTGLLAARAPIH), 52 to 72 (PVLAAIAVLCIAVGAGASGAL), 115 to 135 (MFLGFAVNWLAAGLLAFTIVF), 152 to 172 (IVIGGLAGALPPAIGWAAATG), 178 to 198 (AWLMVAIIFFWTPPHFWALSL), 223 to 243 (KQILLYSLILFPICLSPVLTG), 244 to 264 (LGGPIYLAVSGLGGLVFLLLA), and 303 to 323 (LFAFSILYLFALFAALLGEAV).

The protein belongs to the UbiA prenyltransferase family. Protoheme IX farnesyltransferase subfamily.

It is found in the cell inner membrane. It carries out the reaction heme b + (2E,6E)-farnesyl diphosphate + H2O = Fe(II)-heme o + diphosphate. It participates in porphyrin-containing compound metabolism; heme O biosynthesis; heme O from protoheme: step 1/1. Its function is as follows. Converts heme B (protoheme IX) to heme O by substitution of the vinyl group on carbon 2 of heme B porphyrin ring with a hydroxyethyl farnesyl side group. This is Protoheme IX farnesyltransferase from Caulobacter vibrioides (strain ATCC 19089 / CIP 103742 / CB 15) (Caulobacter crescentus).